A 264-amino-acid polypeptide reads, in one-letter code: MRLVPLDCAEQVSRWAARYIVDKINAFQPTAEKPFVLGLPTGGTPLQTYKELIKLYQAGEVSFKHVVTFNMDEYVGLPPEHKESYHYFMFHNFFNHIDIPVENVNILNGMAEDVDAECERYEAKIRSYGKIHLFMGGVGVDGHIAFNEPASSLSSRTRIKTLTEDTLIANSRFFDNDVNKVPKFALTVGVGTLMDAEEVLILVTGYNKALALQACVEGAVNHLWTISALQLHRRAVVVCDEPATQELKVKTVKYFKQLEQNIAR.

Residue aspartate 72 is the Proton acceptor; for enolization step of the active site. Catalysis depends on aspartate 141, which acts as the For ring-opening step. Histidine 143 serves as the catalytic Proton acceptor; for ring-opening step. Residue glutamate 148 is the For ring-opening step of the active site.

This sequence belongs to the glucosamine/galactosamine-6-phosphate isomerase family. NagB subfamily. In terms of assembly, homohexamer.

The enzyme catalyses alpha-D-glucosamine 6-phosphate + H2O = beta-D-fructose 6-phosphate + NH4(+). It functions in the pathway amino-sugar metabolism; N-acetylneuraminate degradation; D-fructose 6-phosphate from N-acetylneuraminate: step 5/5. Its activity is regulated as follows. Allosterically activated by N-acetylglucosamine 6-phosphate (GlcNAc6P). Catalyzes the reversible isomerization-deamination of glucosamine 6-phosphate (GlcN6P) to form fructose 6-phosphate (Fru6P) and ammonium ion. In Glaesserella parasuis serovar 5 (strain SH0165) (Haemophilus parasuis), this protein is Glucosamine-6-phosphate deaminase.